Reading from the N-terminus, the 180-residue chain is ATP synthase subunit delta (180 aa).

It belongs to the ATPase delta chain family. F-type ATPases have 2 components, F(1) - the catalytic core - and F(0) - the membrane proton channel. F(1) has five subunits: alpha(3), beta(3), gamma(1), delta(1), epsilon(1). F(0) has three main subunits: a(1), b(2) and c(10-14). The alpha and beta chains form an alternating ring which encloses part of the gamma chain. F(1) is attached to F(0) by a central stalk formed by the gamma and epsilon chains, while a peripheral stalk is formed by the delta and b chains.

The protein resides in the cell inner membrane. Functionally, f(1)F(0) ATP synthase produces ATP from ADP in the presence of a proton or sodium gradient. F-type ATPases consist of two structural domains, F(1) containing the extramembraneous catalytic core and F(0) containing the membrane proton channel, linked together by a central stalk and a peripheral stalk. During catalysis, ATP synthesis in the catalytic domain of F(1) is coupled via a rotary mechanism of the central stalk subunits to proton translocation. In terms of biological role, this protein is part of the stalk that links CF(0) to CF(1). It either transmits conformational changes from CF(0) to CF(1) or is implicated in proton conduction. The chain is ATP synthase subunit delta from Pelobacter propionicus (strain DSM 2379 / NBRC 103807 / OttBd1).